The primary structure comprises 967 residues: Disks large homolog 1 (967 aa).

The region spanning 5–65 (SSEKAHKAIE…LYEQTLLSER (61 aa)) is the L27 domain. The region spanning 202–289 (NIVLEKGHTG…VVSLSLKRRK (88 aa)) is the PDZ 1 domain. The segment at 324–351 (IHSPSAPIHPPPPPPVHHGSLSQLSVGQ) is disordered. Residues 330–339 (PIHPPPPPPV) are compositionally biased toward pro residues. PDZ domains lie at 361–448 (VIDL…QQGT) and 510–591 (PVQL…QYRP). The 72-residue stretch at 619–690 (RKSEYVRALF…PSKKRVEKRE (72 aa)) folds into the SH3 domain. Residues 673–723 (EETAEGVIPSKKRVEKRERLRRKQVNFNSGSQSLGRNSSTTGLENRRGSRS) are disordered. Residues 682–696 (SKKRVEKRERLRRKQ) show a composition bias toward basic residues. Positions 697 to 715 (VNFNSGSQSLGRNSSTTGL) are enriched in polar residues. The 187-residue stretch at 769–955 (VRPVIILGAL…VLSKVYSIIS (187 aa)) folds into the Guanylate kinase-like domain.

Belongs to the MAGUK family. Homooligomerizes; requires L27 domain. Interacts (via L27 domain) with ajm-1; the interaction regulates ajm-1 apical junction location. In terms of tissue distribution, expressed in the apical junctions in the hypodermis. Expressed in epithelial cells in the reproductive system including vulva, uterus and spermatheca.

It is found in the membrane. It localises to the apical cell membrane. Its subcellular location is the cell junction. The protein localises to the adherens junction. The protein resides in the lateral cell membrane. It is found in the cytoplasm. Its function is as follows. Essential multidomain scaffolding protein required for normal development. Recruits channels, receptors and signaling molecules to discrete plasma membrane domains in polarized cells. Required for proper embryonic elongation. Acts upstream of ajm-1 and becomes localized to apical junctions independently of ajm-1. With let-413, cooperatively regulates ajm-1 localization to apical junctions and the establishment of newly formed epithelia. Plays a role in assembling the adherens junction by clustering ajm-1 and other proteins, to form electron-dense structures; may form a compartment distinct to that of hmp-1 and associated proteins. Plays a role in the directed outgrowth of seam cells, towards neighboring seam cells, during larval development. The chain is Disks large homolog 1 from Caenorhabditis elegans.